The sequence spans 96 residues: Aspartyl/glutamyl-tRNA(Asn/Gln) amidotransferase subunit C (96 aa).

This sequence belongs to the GatC family. In terms of assembly, heterotrimer of A, B and C subunits.

It catalyses the reaction L-glutamyl-tRNA(Gln) + L-glutamine + ATP + H2O = L-glutaminyl-tRNA(Gln) + L-glutamate + ADP + phosphate + H(+). The catalysed reaction is L-aspartyl-tRNA(Asn) + L-glutamine + ATP + H2O = L-asparaginyl-tRNA(Asn) + L-glutamate + ADP + phosphate + 2 H(+). Its function is as follows. Allows the formation of correctly charged Asn-tRNA(Asn) or Gln-tRNA(Gln) through the transamidation of misacylated Asp-tRNA(Asn) or Glu-tRNA(Gln) in organisms which lack either or both of asparaginyl-tRNA or glutaminyl-tRNA synthetases. The reaction takes place in the presence of glutamine and ATP through an activated phospho-Asp-tRNA(Asn) or phospho-Glu-tRNA(Gln). The sequence is that of Aspartyl/glutamyl-tRNA(Asn/Gln) amidotransferase subunit C from Chloroflexus aggregans (strain MD-66 / DSM 9485).